The primary structure comprises 176 residues: ATP-dependent protease subunit HslV (176 aa).

Residue threonine 2 is part of the active site. Glycine 157, cysteine 160, and threonine 163 together coordinate Na(+).

This sequence belongs to the peptidase T1B family. HslV subfamily. A double ring-shaped homohexamer of HslV is capped on each side by a ring-shaped HslU homohexamer. The assembly of the HslU/HslV complex is dependent on binding of ATP.

The protein localises to the cytoplasm. It carries out the reaction ATP-dependent cleavage of peptide bonds with broad specificity.. Allosterically activated by HslU binding. In terms of biological role, protease subunit of a proteasome-like degradation complex believed to be a general protein degrading machinery. In Photorhabdus laumondii subsp. laumondii (strain DSM 15139 / CIP 105565 / TT01) (Photorhabdus luminescens subsp. laumondii), this protein is ATP-dependent protease subunit HslV.